The primary structure comprises 362 residues: Phosphoserine aminotransferase (362 aa).

Arg42 is a binding site for L-glutamate. Positions 102, 154, 174, and 197 each coordinate pyridoxal 5'-phosphate. Lys198 carries the post-translational modification N6-(pyridoxal phosphate)lysine. 239–240 (NT) provides a ligand contact to pyridoxal 5'-phosphate.

Belongs to the class-V pyridoxal-phosphate-dependent aminotransferase family. SerC subfamily. In terms of assembly, homodimer. It depends on pyridoxal 5'-phosphate as a cofactor.

The protein localises to the cytoplasm. The enzyme catalyses O-phospho-L-serine + 2-oxoglutarate = 3-phosphooxypyruvate + L-glutamate. The catalysed reaction is 4-(phosphooxy)-L-threonine + 2-oxoglutarate = (R)-3-hydroxy-2-oxo-4-phosphooxybutanoate + L-glutamate. It functions in the pathway amino-acid biosynthesis; L-serine biosynthesis; L-serine from 3-phospho-D-glycerate: step 2/3. The protein operates within cofactor biosynthesis; pyridoxine 5'-phosphate biosynthesis; pyridoxine 5'-phosphate from D-erythrose 4-phosphate: step 3/5. Catalyzes the reversible conversion of 3-phosphohydroxypyruvate to phosphoserine and of 3-hydroxy-2-oxo-4-phosphonooxybutanoate to phosphohydroxythreonine. This chain is Phosphoserine aminotransferase, found in Haemophilus ducreyi (strain 35000HP / ATCC 700724).